A 961-amino-acid polypeptide reads, in one-letter code: MRWLTLIAVAHLIAFLSSAEITCPRIPEKCDCKISKSMIILSCNGEDVKTIAQTVGTSQIDELHILNGTDVKIESLPFNGLRTIAILNSTLQSFSPTAWRHVEATIEHITINGNELKTVPVFGNLSTLMSMNLNSNQISSIPDKAFNGLSALTQLRLENNAICDFPPKSLDAVKASLVLLDVSGNCLDAIPAQILRNAANLMYLDLGSNNISEINNFELMNLPFLRELRVQNNTLRRIHPMAFMNVPQLQYLYLQDNIISTLDGNRLQGFKNLEVLDVSNNALYALPSLKDLPNLKQVRVDGNLITKIETLAFSNNPNLQLISVQNNNIVQISRNSFESLDKLVVLLVGNNSLAKIERGMFDGMKNLQQLSIRNNTLTALDASSFAQLAHLTTLDLGHNKIHDIEEGTFDKLSKLFWLDLSNNKISGFKTSVFKKKISNILLDGNQLICDESFNEFLTYLIANKVRTFLPFQQEIMCHGPEKYAGVRLKDLMMKKANETLSEGSRLLGVPQGSNQHSLLSSFLPSLGPLGTLNGAGGAAIPLVNTLTNTIPALRSIPGFGGNIPVGTGASSVPNKNLNDAIEGFTGPLVRFATGGQPVASDIEQLIRSIPNMVVNVPGFGDIDLSKMDPTMIQYVLNGGQIPGIDKATLDKIVKQTMNKMHTAAAANLAGNPVEGQEKVLPPLDKLPSGLVTQVMSGEPLPGLNENQTKIIMEYYTHQMPGMDGIPARPVESQGNTTANNMFNPAMFDLLKMLPPGYNLSKIPMEVIAAVTRGEVPDMRLLPEDLLEHFKQHTTSLTSMFAGATAKNISIEEILEKLPVFVRPELSTFVPYDINELTSEMVLEQEQNERHRNIRIITAIALAFVGAVTVVVIIFFVNYTKKQRRLRKSLVYRSSPSSSGSSGQNAANESGRSSAAPSPIRPPLMNIPKTPNNRTMESTFGQPQLCSTLLENPQAVSHRSRH.

Residues 1 to 18 (MRWLTLIAVAHLIAFLSS) form the signal peptide. At 19–854 (AEITCPRIPE…EQNERHRNIR (836 aa)) the chain is on the extracellular side. 17 LRR repeats span residues 60 to 78 (IDEL…SLPF), 79 to 101 (NGLR…AWRH), 103 to 124 (EATI…VFGN), 125 to 148 (LSTL…AFNG), 150 to 172 (SALT…SLDA), 174 to 197 (KASL…ILRN), 199 to 222 (ANLM…LMNL), 223 to 245 (PFLR…AFMN), 247 to 269 (PQLQ…RLQG), 270 to 294 (FKNL…DLPN), 305 to 316 (ITKIETLAFSNN), 317 to 339 (PNLQ…SFES), 340 to 363 (LDKL…MFDG), 364 to 387 (MKNL…SFAQ), 388 to 411 (LAHL…TFDK), 413 to 435 (SKLF…VFKK), and 437 to 455 (ISNI…SFNE). The chain crosses the membrane as a helical span at residues 855–875 (IITAIALAFVGAVTVVVIIFF). Over 876 to 961 (VNYTKKQRRL…PQAVSHRSRH (86 aa)) the chain is Cytoplasmic. The disordered stretch occupies residues 890–943 (VYRSSPSSSGSSGQNAANESGRSSAAPSPIRPPLMNIPKTPNNRTMESTFGQPQ). Over residues 893-902 (SSPSSSGSSG) the composition is skewed to low complexity. Over residues 928–943 (KTPNNRTMESTFGQPQ) the composition is skewed to polar residues.

As to expression, in L1 larvae, expressed in a subset of epithelial cells including epidermal, vulval and rectal cells and the excretory duct and pore. Also detected in some neurons. Absent from internal epithelia such as the gut and pharyngeal tubes.

The protein resides in the apical cell membrane. Its function is as follows. Required for apical extracellular matrix organization and epithelial junction maintenance. In Caenorhabditis elegans, this protein is Leucine-rich repeat-containing protein egg-6.